A 507-amino-acid chain; its full sequence is Glycerol kinase 2 (507 aa).

Position 16 (T16) interacts with ADP. T16, T17, and S18 together coordinate ATP. T16 is a binding site for sn-glycerol 3-phosphate. R20 contributes to the ADP binding site. The sn-glycerol 3-phosphate site is built by R86, E87, Y138, and D248. Glycerol-binding residues include R86, E87, Y138, D248, and Q249. ADP is bound by residues T270 and G314. 4 residues coordinate ATP: T270, G314, Q318, and G415. Residues G415 and N419 each coordinate ADP.

It belongs to the FGGY kinase family.

The enzyme catalyses glycerol + ATP = sn-glycerol 3-phosphate + ADP + H(+). The protein operates within polyol metabolism; glycerol degradation via glycerol kinase pathway; sn-glycerol 3-phosphate from glycerol: step 1/1. Inhibited by fructose 1,6-bisphosphate (FBP). In terms of biological role, key enzyme in the regulation of glycerol uptake and metabolism. Catalyzes the phosphorylation of glycerol to yield sn-glycerol 3-phosphate. The protein is Glycerol kinase 2 of Streptomyces avermitilis (strain ATCC 31267 / DSM 46492 / JCM 5070 / NBRC 14893 / NCIMB 12804 / NRRL 8165 / MA-4680).